The primary structure comprises 260 residues: Pyridoxine 5'-phosphate synthase (260 aa).

Asparagine 15 lines the 3-amino-2-oxopropyl phosphate pocket. 17-18 provides a ligand contact to 1-deoxy-D-xylulose 5-phosphate; sequence DH. Arginine 26 provides a ligand contact to 3-amino-2-oxopropyl phosphate. The active-site Proton acceptor is the histidine 51. Arginine 53 and histidine 58 together coordinate 1-deoxy-D-xylulose 5-phosphate. Glutamate 78 serves as the catalytic Proton acceptor. Threonine 108 provides a ligand contact to 1-deoxy-D-xylulose 5-phosphate. Histidine 199 serves as the catalytic Proton donor. 3-amino-2-oxopropyl phosphate-binding positions include glycine 200 and 221-222; that span reads GH.

Belongs to the PNP synthase family. In terms of assembly, homooctamer; tetramer of dimers.

It is found in the cytoplasm. The catalysed reaction is 3-amino-2-oxopropyl phosphate + 1-deoxy-D-xylulose 5-phosphate = pyridoxine 5'-phosphate + phosphate + 2 H2O + H(+). It participates in cofactor biosynthesis; pyridoxine 5'-phosphate biosynthesis; pyridoxine 5'-phosphate from D-erythrose 4-phosphate: step 5/5. Functionally, catalyzes the complicated ring closure reaction between the two acyclic compounds 1-deoxy-D-xylulose-5-phosphate (DXP) and 3-amino-2-oxopropyl phosphate (1-amino-acetone-3-phosphate or AAP) to form pyridoxine 5'-phosphate (PNP) and inorganic phosphate. The polypeptide is Pyridoxine 5'-phosphate synthase (Cupriavidus necator (strain ATCC 17699 / DSM 428 / KCTC 22496 / NCIMB 10442 / H16 / Stanier 337) (Ralstonia eutropha)).